Reading from the N-terminus, the 519-residue chain is 2-isopropylmalate synthase (519 aa).

Positions 5 to 267 constitute a Pyruvate carboxyltransferase domain; it reads VIIFDTTLRD…YTNIHHHEIY (263 aa). Mn(2+) contacts are provided by D14, H202, H204, and N238. The regulatory domain stretch occupies residues 392–519; that stretch reads ALESFHIHST…NHKNTQHIKK (128 aa).

Belongs to the alpha-IPM synthase/homocitrate synthase family. LeuA type 1 subfamily. As to quaternary structure, homodimer. Mn(2+) serves as cofactor.

It localises to the cytoplasm. The enzyme catalyses 3-methyl-2-oxobutanoate + acetyl-CoA + H2O = (2S)-2-isopropylmalate + CoA + H(+). Its pathway is amino-acid biosynthesis; L-leucine biosynthesis; L-leucine from 3-methyl-2-oxobutanoate: step 1/4. Its function is as follows. Catalyzes the condensation of the acetyl group of acetyl-CoA with 3-methyl-2-oxobutanoate (2-ketoisovalerate) to form 3-carboxy-3-hydroxy-4-methylpentanoate (2-isopropylmalate). The chain is 2-isopropylmalate synthase from Blochmanniella floridana.